A 205-amino-acid polypeptide reads, in one-letter code: GTP-binding protein rho3 (205 aa).

20-27 (GDGAAGKT) provides a ligand contact to GTP. Residues 42-50 (YEPTIFENY) carry the Effector region motif. GTP contacts are provided by residues 67-71 (DTAGQ) and 125-128 (LKCD). Cysteine methyl ester is present on Cys-202. Residue Cys-202 is the site of S-geranylgeranyl cysteine attachment. A propeptide spans 203 to 205 (IIA) (removed in mature form).

It belongs to the small GTPase superfamily. Rho family. Interacts with for3. In terms of processing, palmitoylated by the erf2-erf4 complex.

It localises to the cell membrane. Its function is as follows. Involved in controlling cell shape and septation. Regulates cell separation by modulating the function of the exocyst complex. Involved in post-Golgi vesicle transport. Involved in driving sexual development in a palmitoylation-dependent manner. The polypeptide is GTP-binding protein rho3 (rho3) (Schizosaccharomyces pombe (strain 972 / ATCC 24843) (Fission yeast)).